The primary structure comprises 146 residues: Putative pre-16S rRNA nuclease (146 aa).

This sequence belongs to the YqgF nuclease family.

It is found in the cytoplasm. Functionally, could be a nuclease involved in processing of the 5'-end of pre-16S rRNA. The chain is Putative pre-16S rRNA nuclease from Pseudomonas syringae pv. tomato (strain ATCC BAA-871 / DC3000).